We begin with the raw amino-acid sequence, 249 residues long: uncharacterized protein (249 aa).

6 residues coordinate a divalent metal cation: H10, H12, E95, H129, H150, and D198.

Belongs to the metallo-dependent hydrolases superfamily. TatD-type hydrolase family. The cofactor is a divalent metal cation.

This is an uncharacterized protein from Methanocaldococcus jannaschii (strain ATCC 43067 / DSM 2661 / JAL-1 / JCM 10045 / NBRC 100440) (Methanococcus jannaschii).